Here is a 125-residue protein sequence, read N- to C-terminus: MNVRINAEEIIRSIEAAQMKPDLPEIRVGDQVRVGVRIQEGGKERVQAFEGTVIAMRHSGINRTITVRKVFQGIGVERVFLIHSPRIESIQVLRRGKVRRAKLFYLRDRVGKATRIKAKAESPDS.

It belongs to the bacterial ribosomal protein bL19 family.

Functionally, this protein is located at the 30S-50S ribosomal subunit interface and may play a role in the structure and function of the aminoacyl-tRNA binding site. The chain is Large ribosomal subunit protein bL19 from Synechococcus sp. (strain JA-2-3B'a(2-13)) (Cyanobacteria bacterium Yellowstone B-Prime).